Consider the following 411-residue polypeptide: MSDSVILALGIAAFTVIVLVLVAIILFAKSKLVDSGDITIDINDDPEKAITLPAGGKLLGALASKGIFVSSACGGGGSCGQCIVKVKNGGGEILPTELSHINKREAKEGYRLACQVNVKGNMEVELPEEIFGVKKWECTVISNDNKATFIKELKLAIPEGEEVPFRAGGYIQIEAEPHVVNYKDFDIPEEYHEDWDKYDLWRYVSKVDEHIIRAYSMASYPEEKGIIMLNVRIATPPPRQPDAPPGQMSSYIWSLKAGDKVTISGPFGEFFAKETDAEMVFIGGGAGMAPMRSHIFDQLKRLHSKRKMSFWYGARSKREIFYQEDFDQLQAENDNFVWHVALSDALPEDNWTGYTGFIHNVLYENYLKNHEAPEDCEYYMCGPPVMNAAVIKMLKDLGVEDENILLDDFGG.

A helical membrane pass occupies residues 5-25 (VILALGIAAFTVIVLVLVAII). Residues 36–130 (GDITIDINDD…NMEVELPEEI (95 aa)) form the 2Fe-2S ferredoxin-type domain. Residues C73, C79, C82, and C114 each coordinate [2Fe-2S] cluster. One can recognise an FAD-binding FR-type domain in the interval 133–273 (VKKWECTVIS…SGPFGEFFAK (141 aa)).

Belongs to the NqrF family. As to quaternary structure, composed of six subunits; NqrA, NqrB, NqrC, NqrD, NqrE and NqrF. Requires [2Fe-2S] cluster as cofactor. FAD serves as cofactor.

Its subcellular location is the cell inner membrane. The enzyme catalyses a ubiquinone + n Na(+)(in) + NADH + H(+) = a ubiquinol + n Na(+)(out) + NAD(+). Its function is as follows. NQR complex catalyzes the reduction of ubiquinone-1 to ubiquinol by two successive reactions, coupled with the transport of Na(+) ions from the cytoplasm to the periplasm. The first step is catalyzed by NqrF, which accepts electrons from NADH and reduces ubiquinone-1 to ubisemiquinone by a one-electron transfer pathway. This chain is Na(+)-translocating NADH-quinone reductase subunit F, found in Haemophilus influenzae (strain PittGG).